The primary structure comprises 300 residues: MMTYLSKQFSKLLFGQLLFLFIGNLLLKPVQAYPIYAQQAYANPREVTGRIVCANCHLAQKAIELEVPNSVLPNQEFEATVKIDYDLNQKQLLGNGQKGGLNVGAVLILPEGFRLSPNSRSPFFNTYSEQLPNVIVIGPVPGEKYREIHFPLKAPDPTTNKQVHFVKYSIYAGGNRGRGQLYPNGQKSNNAPVLASVNGVIEQIRENEVVIKTDQGDLVSQAIPAGHTLLVKQGQKIQNEQPLTMDPNVGGFGQAEKEIVLQNPTRLKTFIAFCVTVFIGQLAFVLKKKQVERVQASEMN.

The N-terminal stretch at 1 to 32 is a signal peptide; it reads MMTYLSKQFSKLLFGQLLFLFIGNLLLKPVQA. 4 residues coordinate heme: Y33, C53, C56, and H57. The chain crosses the membrane as a helical span at residues 267-287; that stretch reads LKTFIAFCVTVFIGQLAFVLK.

This sequence belongs to the cytochrome f family. In terms of assembly, the 4 large subunits of the cytochrome b6-f complex are cytochrome b6, subunit IV (17 kDa polypeptide, petD), cytochrome f and the Rieske protein, while the 4 small subunits are PetG, PetL, PetM and PetN. The complex functions as a dimer. Requires heme as cofactor.

It localises to the plastid. The protein localises to the chloroplast thylakoid membrane. Its function is as follows. Component of the cytochrome b6-f complex, which mediates electron transfer between photosystem II (PSII) and photosystem I (PSI), cyclic electron flow around PSI, and state transitions. The polypeptide is Cytochrome f (Cyanidioschyzon merolae (strain NIES-3377 / 10D) (Unicellular red alga)).